The chain runs to 783 residues: Protein DWD HYPERSENSITIVE TO UV-B 1 (783 aa).

2 WD repeats span residues glycine 145–proline 198 and serine 212–leucine 256. A Nuclear localization signal motif is present at residues arginine 382–arginine 389. WD repeat units follow at residues aspartate 439–tyrosine 480, glycine 485–threonine 525, aspartate 538–valine 577, methionine 581–cysteine 621, serine 625–asparagine 664, and glutamate 666–arginine 710.

In terms of assembly, interacts directly with DDB1A. Binds to COP1 and RUP1.

The protein localises to the nucleus. Functionally, may act as a substrate receptor of a CUL4-RING E3 ubiquitin-protein ligase (CRL4) complex involved in the negative regulation of cellular responses to ultraviolet-B (UV-B) illumination, likely in coordination with RUP1. Interacts with COP1 and probably prevents the formation of active UVR8-COP1 complex, thus avoiding UVR8-COP1-mediated positive regulation of UV-B responses. This Arabidopsis thaliana (Mouse-ear cress) protein is Protein DWD HYPERSENSITIVE TO UV-B 1.